The following is a 388-amino-acid chain: Galactokinase (388 aa).

Glu33–Asp36 provides a ligand contact to substrate. ATP contacts are provided by residues Ser67 and Gly124–Ser130. Mg(2+) contacts are provided by Ser130 and Glu162. Asp174 serves as the catalytic Proton acceptor. Tyr224 is a binding site for substrate.

This sequence belongs to the GHMP kinase family. GalK subfamily.

It localises to the cytoplasm. It catalyses the reaction alpha-D-galactose + ATP = alpha-D-galactose 1-phosphate + ADP + H(+). The protein operates within carbohydrate metabolism; galactose metabolism. In terms of biological role, catalyzes the transfer of the gamma-phosphate of ATP to D-galactose to form alpha-D-galactose-1-phosphate (Gal-1-P). The protein is Galactokinase of Streptococcus thermophilus.